The chain runs to 295 residues: GTPase Era (295 aa).

Positions Lys-7–Trp-176 constitute an Era-type G domain. A G1 region spans residues Gly-15 to Ser-22. Residue Gly-15 to Ser-22 coordinates GTP. A G2 region spans residues Gln-41 to Ser-45. Positions Asp-62–Gly-65 are G3. GTP-binding positions include Asp-62 to Ile-66 and Asn-124 to Asp-127. Residues Asn-124–Asp-127 form a G4 region. The segment at Ile-152–Ala-154 is G5. The KH type-2 domain occupies Leu-204–Glu-281.

Belongs to the TRAFAC class TrmE-Era-EngA-EngB-Septin-like GTPase superfamily. Era GTPase family. As to quaternary structure, monomer.

The protein localises to the cytoplasm. It localises to the cell inner membrane. Its function is as follows. An essential GTPase that binds both GDP and GTP, with rapid nucleotide exchange. Plays a role in 16S rRNA processing and 30S ribosomal subunit biogenesis and possibly also in cell cycle regulation and energy metabolism. This is GTPase Era from Rickettsia bellii (strain RML369-C).